Consider the following 301-residue polypeptide: 2-phosphoglycerate kinase (301 aa).

The ATP-cone domain occupies Ile2–Val89.

This sequence belongs to the 2-phosphoglycerate kinase family. A divalent metal cation serves as cofactor.

The enzyme catalyses (2R)-2-phosphoglycerate + ATP = (2R)-2,3-bisphosphoglycerate + ADP + H(+). Its pathway is thermoadapter biosynthesis; cyclic 2,3-diphosphoglycerate biosynthesis; cyclic 2,3-diphosphoglycerate from 2-phospho-D-glycerate: step 1/2. Catalyzes the phosphorylation of 2-phosphoglycerate to 2,3-diphosphoglycerate. Involved in the biosynthesis of cyclic 2,3-bisphosphoglycerate, a thermoprotectant. In Pyrococcus horikoshii (strain ATCC 700860 / DSM 12428 / JCM 9974 / NBRC 100139 / OT-3), this protein is 2-phosphoglycerate kinase.